A 376-amino-acid chain; its full sequence is Chaperone protein DnaJ (376 aa).

Residues 4–70 form the J domain; that stretch reads DYYQILGVSK…QKRAAYDRFG (67 aa). A CR-type zinc finger spans residues 139–217; that stretch reads GVEKNISFSS…CHGLGRYHKQ (79 aa). Positions 152, 155, 169, 172, 191, 194, 205, and 208 each coordinate Zn(2+). 4 CXXCXGXG motif repeats span residues 152 to 159, 169 to 176, 191 to 198, and 205 to 212; these read CDTCHGSG, CDACGGVG, CHKCQGNG, and CKKCHGLG.

This sequence belongs to the DnaJ family. As to quaternary structure, homodimer. Zn(2+) is required as a cofactor.

Its subcellular location is the cytoplasm. Functionally, participates actively in the response to hyperosmotic and heat shock by preventing the aggregation of stress-denatured proteins and by disaggregating proteins, also in an autonomous, DnaK-independent fashion. Unfolded proteins bind initially to DnaJ; upon interaction with the DnaJ-bound protein, DnaK hydrolyzes its bound ATP, resulting in the formation of a stable complex. GrpE releases ADP from DnaK; ATP binding to DnaK triggers the release of the substrate protein, thus completing the reaction cycle. Several rounds of ATP-dependent interactions between DnaJ, DnaK and GrpE are required for fully efficient folding. Also involved, together with DnaK and GrpE, in the DNA replication of plasmids through activation of initiation proteins. In Rickettsia bellii (strain OSU 85-389), this protein is Chaperone protein DnaJ.